Here is a 303-residue protein sequence, read N- to C-terminus: Catechol 1,2-dioxygenase (303 aa).

Tyrosine 156, tyrosine 191, histidine 215, and histidine 217 together coordinate Fe cation.

As to quaternary structure, homodimer. Fe(3+) is required as a cofactor.

It carries out the reaction catechol + O2 = cis,cis-muconate + 2 H(+). It functions in the pathway aromatic compound metabolism; beta-ketoadipate pathway; 5-oxo-4,5-dihydro-2-furylacetate from catechol: step 1/3. Inhibited by Ag(+), Cu(+), Hg(2+) and Pb(2+). Functionally, can cleave 4-methylcatechol at lower rates than catechol, but has no activity with 3-methylcatechol, 4-chlorocatechol, 4-carboxycatechol or hydroxyquinol. The polypeptide is Catechol 1,2-dioxygenase (HQD2) (Candida albicans (strain SC5314 / ATCC MYA-2876) (Yeast)).